We begin with the raw amino-acid sequence, 250 residues long: Coproheme decarboxylase (250 aa).

Fe-coproporphyrin III contacts are provided by residues Arg-131, 145–149 (YPMNK), His-172, and Gln-185. Tyr-145 is a catalytic residue.

Belongs to the ChdC family. Type 1 subfamily. Fe-coproporphyrin III serves as cofactor.

It carries out the reaction Fe-coproporphyrin III + 2 H2O2 + 2 H(+) = heme b + 2 CO2 + 4 H2O. The enzyme catalyses Fe-coproporphyrin III + H2O2 + H(+) = harderoheme III + CO2 + 2 H2O. It catalyses the reaction harderoheme III + H2O2 + H(+) = heme b + CO2 + 2 H2O. It participates in porphyrin-containing compound metabolism; protoheme biosynthesis. Involved in coproporphyrin-dependent heme b biosynthesis. Catalyzes the decarboxylation of Fe-coproporphyrin III (coproheme) to heme b (protoheme IX), the last step of the pathway. The reaction occurs in a stepwise manner with a three-propionate intermediate. This is Coproheme decarboxylase from Staphylococcus aureus (strain MRSA252).